A 407-amino-acid chain; its full sequence is Argininosuccinate synthase (407 aa).

Residues alanine 16–serine 24 and alanine 44 each bind ATP. Tyrosine 96 and serine 101 together coordinate L-citrulline. Position 126 (glycine 126) interacts with ATP. L-aspartate is bound by residues threonine 128, asparagine 132, and aspartate 133. Position 132 (asparagine 132) interacts with L-citrulline. L-citrulline is bound by residues arginine 136, serine 185, serine 194, glutamate 270, and tyrosine 282.

Belongs to the argininosuccinate synthase family. Type 1 subfamily. In terms of assembly, homotetramer.

Its subcellular location is the cytoplasm. The enzyme catalyses L-citrulline + L-aspartate + ATP = 2-(N(omega)-L-arginino)succinate + AMP + diphosphate + H(+). It participates in amino-acid biosynthesis; L-arginine biosynthesis; L-arginine from L-ornithine and carbamoyl phosphate: step 2/3. The chain is Argininosuccinate synthase from Shewanella sp. (strain W3-18-1).